Here is a 195-residue protein sequence, read N- to C-terminus: Pyridoxal 5'-phosphate synthase subunit PdxT (195 aa).

49–51 (GES) is an L-glutamine binding site. Cysteine 81 serves as the catalytic Nucleophile. Residues arginine 113 and 141-142 (IR) each bind L-glutamine. Residues histidine 177 and glutamate 179 each act as charge relay system in the active site.

It belongs to the glutaminase PdxT/SNO family. As to quaternary structure, in the presence of PdxS, forms a dodecamer of heterodimers. Only shows activity in the heterodimer.

The enzyme catalyses aldehydo-D-ribose 5-phosphate + D-glyceraldehyde 3-phosphate + L-glutamine = pyridoxal 5'-phosphate + L-glutamate + phosphate + 3 H2O + H(+). It catalyses the reaction L-glutamine + H2O = L-glutamate + NH4(+). It participates in cofactor biosynthesis; pyridoxal 5'-phosphate biosynthesis. In terms of biological role, catalyzes the hydrolysis of glutamine to glutamate and ammonia as part of the biosynthesis of pyridoxal 5'-phosphate. The resulting ammonia molecule is channeled to the active site of PdxS. The polypeptide is Pyridoxal 5'-phosphate synthase subunit PdxT (Mycolicibacterium vanbaalenii (strain DSM 7251 / JCM 13017 / BCRC 16820 / KCTC 9966 / NRRL B-24157 / PYR-1) (Mycobacterium vanbaalenii)).